The primary structure comprises 81 residues: Large ribosomal subunit protein uL29c (81 aa).

Belongs to the universal ribosomal protein uL29 family.

The protein localises to the plastid. The protein resides in the chloroplast. This chain is Large ribosomal subunit protein uL29c, found in Phaeodactylum tricornutum (strain CCAP 1055/1).